We begin with the raw amino-acid sequence, 307 residues long: Nicotinamide/nicotinic acid mononucleotide adenylyltransferase 2 (307 aa).

The NAD(+) site is built by serine 16 and phenylalanine 17. Histidine 24 lines the ATP pocket. NAD(+) contacts are provided by tryptophan 92 and threonine 95. Residues cysteine 164 and cysteine 165 are each lipidated (S-palmitoyl cysteine). Positions 200, 202, 212, 213, and 232 each coordinate NAD(+). ATP is bound at residue 271 to 274 (TKSR).

This sequence belongs to the eukaryotic NMN adenylyltransferase family. Monomer. Mg(2+) serves as cofactor. Degraded in response to injured neurite. Degradation is caused by polyubiquitination by MYCBP2 after recognition by FBXO45. Post-translationally, palmitoylated; palmitoylation is required for membrane association.

The protein resides in the golgi apparatus membrane. The protein localises to the cytoplasmic vesicle membrane. Its subcellular location is the cytoplasm. It is found in the cell projection. It localises to the axon. The catalysed reaction is beta-nicotinamide D-ribonucleotide + ATP + H(+) = diphosphate + NAD(+). The enzyme catalyses nicotinate beta-D-ribonucleotide + ATP + H(+) = deamido-NAD(+) + diphosphate. It functions in the pathway cofactor biosynthesis; NAD(+) biosynthesis; NAD(+) from nicotinamide D-ribonucleotide: step 1/1. Its pathway is cofactor biosynthesis; NAD(+) biosynthesis; deamido-NAD(+) from nicotinate D-ribonucleotide: step 1/1. Inhibited by P1-(adenosine-5')-P3-(nicotinamide-riboside-5')-triphosphate (Np3AD) and P1-(adenosine-5')-P4-(nicotinamide-riboside-5')-tetraphosphate (Np4AD). Functionally, nicotinamide/nicotinate-nucleotide adenylyltransferase that acts as an axon maintenance factor. Axon survival factor required for the maintenance of healthy axons: acts by delaying Wallerian axon degeneration, an evolutionarily conserved process that drives the loss of damaged axons. Catalyzes the formation of NAD(+) from nicotinamide mononucleotide (NMN) and ATP. Can also use the deamidated form; nicotinic acid mononucleotide (NaMN) as substrate but with a lower efficiency. Cannot use triazofurin monophosphate (TrMP) as substrate. Also catalyzes the reverse reaction, i.e. the pyrophosphorolytic cleavage of NAD(+). For the pyrophosphorolytic activity prefers NAD(+), NADH and NaAD as substrates and degrades nicotinic acid adenine dinucleotide phosphate (NHD) less effectively. Fails to cleave phosphorylated dinucleotides NADP(+), NADPH and NaADP(+). Also acts as an activator of ADP-ribosylation by supporting the catalytic activity of PARP16 and promoting mono-ADP-ribosylation of ribosomes by PARP16. May be involved in the maintenance of axonal integrity. This chain is Nicotinamide/nicotinic acid mononucleotide adenylyltransferase 2 (Nmnat2), found in Rattus norvegicus (Rat).